We begin with the raw amino-acid sequence, 579 residues long: Threonylcarbamoyladenosine tRNA methylthiotransferase (579 aa).

Phosphoserine is present on Ser53. An MTTase N-terminal domain is found at 64 to 172; it reads QKIWIRTWGC…VVEVVEETIK (109 aa). Residues Cys73 and Cys109 each coordinate [4Fe-4S] cluster. At Ser122 the chain carries Phosphoserine. [4Fe-4S] cluster contacts are provided by Cys138, Cys214, Cys218, and Cys221. A Radical SAM core domain is found at 200 to 431; it reads RKNPLIEIIS…RVFHSYSPYD (232 aa). Positions 431–493 constitute a TRAM domain; sequence DHKIGERQQV…KHFMKGQPVS (63 aa). At Thr499 the chain carries Phosphothreonine. Residues 556–578 form a helical membrane-spanning segment; sequence CALRMSVGLALLGLLFAFFVKVY.

It belongs to the methylthiotransferase family. CDKAL1 subfamily. It depends on [4Fe-4S] cluster as a cofactor. Expressed in pancreatic islets.

Its subcellular location is the endoplasmic reticulum membrane. It carries out the reaction N(6)-L-threonylcarbamoyladenosine(37) in tRNA + (sulfur carrier)-SH + AH2 + 2 S-adenosyl-L-methionine = 2-methylsulfanyl-N(6)-L-threonylcarbamoyladenosine(37) in tRNA + (sulfur carrier)-H + 5'-deoxyadenosine + L-methionine + A + S-adenosyl-L-homocysteine + 2 H(+). Functionally, catalyzes the methylthiolation of N6-threonylcarbamoyladenosine (t(6)A), leading to the formation of 2-methylthio-N6-threonylcarbamoyladenosine (ms(2)t(6)A) at position 37 in tRNAs that read codons beginning with adenine. The polypeptide is Threonylcarbamoyladenosine tRNA methylthiotransferase (CDKAL1) (Homo sapiens (Human)).